The sequence spans 715 residues: Targeting protein for Xklp2-B (715 aa).

The interval 36 to 167 (NAENIPPDQK…LTMPATPTVL (132 aa)) is disordered. Polar residues predominate over residues 47–56 (LSETSVNAEQ). Over residues 85–103 (QTKRSARRMSKKHRQKILL) the composition is skewed to basic residues. Basic and acidic residues predominate over residues 104–115 (KMKETHLEKETA). Over residues 141-152 (QPTSSHHGTTSP) the composition is skewed to polar residues. S204 carries the phosphoserine; by plk1 modification. Disordered stretches follow at residues 260 to 291 (PPTS…EEAS) and 314 to 337 (RSRQ…TNPK).

This sequence belongs to the TPX2 family. Associates with microtubules. Interacts with aurka and plk1. Interacts with kif15. In terms of processing, phosphorylated during mitosis. Hyperphosphorylated upon assembly of microtubules.

The protein localises to the nucleus. The protein resides in the cytoplasm. It localises to the cytoskeleton. Its subcellular location is the spindle. It is found in the spindle pole. Spindle assembly factor. Required for normal assembly of mitotic spindles. Mediates the binding kif15 and aurka to spindle microtubules. Required for targeting kif15 to microtubule minus ends. Activates aurka by promoting its autophosphorylation and protects the phosphorylated residue against dephosphorylation. The polypeptide is Targeting protein for Xklp2-B (tpx2-b) (Xenopus laevis (African clawed frog)).